The chain runs to 1462 residues: Copper-transporting ATPase 2 (1462 aa).

Residues 1 to 23 (MDPRKNLASVGTMPEQERQVTAK) form a disordered region. The Cytoplasmic segment spans residues 1 to 655 (MDPRKNLASV…KTEIKQWKKS (655 aa)). 4 consecutive HMA domains span residues 68-134 (ATDV…FEAS), 153-219 (AVVK…FEAA), 267-333 (ATLP…PGHF), and 361-427 (RTAV…FEVS). The Cu(+) site is built by C79, C82, C164, C167, C278, and C281. A disordered region spans residues 333-361 (FKVSLPDGVEENEPQSGSSQRHQEQGPGR). A Cu(+)-binding site is contributed by C372. The disordered stretch occupies residues 460–487 (KMAPDTRGLPTHQGPGHSSETPSSPGAT). Over residues 475–487 (GHSSETPSSPGAT) the composition is skewed to polar residues. S478 and S483 each carry phosphoserine. HMA domains follow at residues 490-556 (QKCF…FEAS) and 566-632 (GDIE…FHAS). Positions 501, 504, 577, and 580 each coordinate Cu(+). A helical membrane pass occupies residues 656-677 (FLCSLVFGIPVMGLMVYMLIPS). Residues 678–699 (STPQETMVLDHNIIPGLSVLNL) lie on the Extracellular side of the membrane. The helical transmembrane segment at 700 to 719 (IFFILCTFVQFLGGWYFYVQ) threads the bilayer. Over 720-726 (AYKSLRH) the chain is Cytoplasmic. Residues 727 to 747 (RSANMDVLIVLATTIAYAYSL) traverse the membrane as a helical segment. Residues 748–766 (VILVVAVAEKAEKSPVTFF) are Extracellular-facing. A helical membrane pass occupies residues 767–787 (DTPPMLFVFIALGRWLEHVAK). Residues 788–921 (SKTSEALAKL…KAPIQQLADR (134 aa)) lie on the Cytoplasmic side of the membrane. Residues 922–944 (FSGYFVPFIIIISTLTLVVWIVI) form a helical membrane-spanning segment. Over 945–974 (GFVDFGVVQKYFPSPSKHISQTEVIIRFAF) the chain is Extracellular. Residues 975–996 (QTSITVLCIACPCSLGLATPTA) traverse the membrane as a helical segment. Residues 997 to 1319 (VMVGTGVAAQ…LSKRTVRRIR (323 aa)) lie on the Cytoplasmic side of the membrane. Catalysis depends on D1029, which acts as the 4-aspartylphosphate intermediate. Mg(2+) is bound by residues D1264 and D1268. A helical transmembrane segment spans residues 1320–1337 (VNLVLALIYNMVGIPIAA). The Extracellular segment spans residues 1338–1348 (GVFMPIGIVLQ). The chain crosses the membrane as a helical span at residues 1349–1368 (PWMGSAAMAASSVSVVLSSL). Topologically, residues 1369–1462 (QLKCYRKPDL…LSDRDEEQCI (94 aa)) are cytoplasmic. A phosphoserine mark is found at S1395 and S1454.

The protein belongs to the cation transport ATPase (P-type) (TC 3.A.3) family. Type IB subfamily. Monomer. Interacts with COMMD1/MURR1. Interacts with DCTN4, in a copper-dependent manner. Interacts with ATOX1. Interacts (via C-terminus) with ZBTB16/PLZF. Detected in liver and kidney.

It localises to the golgi apparatus. It is found in the trans-Golgi network membrane. The protein resides in the late endosome. The enzyme catalyses Cu(+)(in) + ATP + H2O = Cu(+)(out) + ADP + phosphate + H(+). Copper ion transmembrane transporter involved in the export of copper out of the cells, such as the efflux of hepatic copper into the bile. The protein is Copper-transporting ATPase 2 (Atp7b) of Mus musculus (Mouse).